A 333-amino-acid polypeptide reads, in one-letter code: Eukaryotic translation initiation factor 2 subunit 2 (333 aa).

Disordered stretches follow at residues 1 to 119 (MSGD…DLDI) and 139 to 164 (ILEK…NQTG). Ser2 is modified (N-acetylserine). 2 positions are modified to phosphoserine: Ser2 and Ser13. The segment covering 13–22 (SKKKKKKKKP) has biased composition (basic residues). Phosphothreonine occurs at positions 31 and 36. The segment covering 40 to 51 (ETKEVEPEPTED) has biased composition (basic and acidic residues). Ser67 carries the post-translational modification Phosphoserine. The span at 96–105 (EGVKDLKIES) shows a compositional bias: basic and acidic residues. A Glycyl lysine isopeptide (Lys-Gly) (interchain with G-Cter in SUMO2) cross-link involves residue Lys102. Ser105 is subject to Phosphoserine. Composition is skewed to acidic residues over residues 106-118 (DVQE…DDLD) and 139-149 (ILEKDEALEDE). Thr111 carries the phosphothreonine modification. 2 positions are modified to phosphoserine: Ser158 and Ser218. Lys265 and Lys293 each carry N6-acetyllysine. The C4-type zinc finger occupies 281–305 (CHTCRSPDTILQKDTRLYFLQCETC).

It belongs to the eIF-2-beta/eIF-5 family. In terms of assembly, eukaryotic translation initiation factor 2 eIF2 is a heterotrimeric complex composed of an alpha (EIF2S1), a beta (EIF2S2) and a gamma (EIF2S3) chain. eIF2 is member of the 43S pre-initiation complex (43S PIC). eIF2 forms a complex with at least CELF1/CUGBP1, CALR, CALR3, EIF2S1, EIF2S2, HSP90B1 and HSPA5. Interacts with BZW2/5MP1. Interacts with EIF5.

It is found in the cytoplasm. The protein localises to the cytosol. Component of the eIF2 complex that functions in the early steps of protein synthesis by forming a ternary complex with GTP and initiator tRNA. This complex binds to a 40S ribosomal subunit, followed by mRNA binding to form the 43S pre-initiation complex (43S PIC). Junction of the 60S ribosomal subunit to form the 80S initiation complex is preceded by hydrolysis of the GTP bound to eIF2 and release of an eIF2-GDP binary complex. In order for eIF2 to recycle and catalyze another round of initiation, the GDP bound to eIF2 must exchange with GTP by way of a reaction catalyzed by eIF2B. The chain is Eukaryotic translation initiation factor 2 subunit 2 (EIF2S2) from Pongo abelii (Sumatran orangutan).